The chain runs to 497 residues: MSSTTDATPTPSGVNGGDSMTVNLNQFYNNGDVAWILTSTALVFIMIPGVGFFYSGLARRRSAISMLFLSMMSVAIVAFQWFFWGYSLTFSHEGGPYIGSLANFGLRQTLGRPSSGASSVPDILFCVFQGMFAAITPALAIGAAADRGRMFPCMVFMFLWTSIVYDPIAFWTWNPNGWLNKLGSYDFAGGSPVHISSGMAALAYSIVIGKRCDHGTTKYRPHNVPHVVLGTVFLWFGWFGFNGGSSAAANMRGVMAVVVTHLAASVGGIVWCVIDFAKNRHWSVVGFCEGAVAGLVAITPGSGFVPPWAAVVIGALGAVFCYAATYLKKIIRVDDALDIFAEHGVGGMVGNILTALFAADYIEALDGSGTAYTGGWITHHYIQLGYQLADTVSCAAYSFAVSCALLFVMNYIPGLSLRVSREDEVLGLDKIELGESAYYYKDSTDEPPPITTSGVQYTSPTVSDSASNEKEQEHRAQNEAQKEEEYRAESEAQAPAI.

At 1-32 the chain is on the extracellular side; sequence MSSTTDATPTPSGVNGGDSMTVNLNQFYNNGD. The chain crosses the membrane as a helical span at residues 33–53; that stretch reads VAWILTSTALVFIMIPGVGFF. Over 54–63 the chain is Cytoplasmic; sequence YSGLARRRSA. The helical transmembrane segment at 64–84 threads the bilayer; it reads ISMLFLSMMSVAIVAFQWFFW. Residues 85–122 are Extracellular-facing; that stretch reads GYSLTFSHEGGPYIGSLANFGLRQTLGRPSSGASSVPD. Residues 123–143 traverse the membrane as a helical segment; sequence ILFCVFQGMFAAITPALAIGA. The Cytoplasmic segment spans residues 144–150; the sequence is AADRGRM. A helical membrane pass occupies residues 151-171; that stretch reads FPCMVFMFLWTSIVYDPIAFW. Residues 172–187 are Extracellular-facing; that stretch reads TWNPNGWLNKLGSYDF. Residues 188–208 traverse the membrane as a helical segment; sequence AGGSPVHISSGMAALAYSIVI. The Cytoplasmic segment spans residues 209 to 223; it reads GKRCDHGTTKYRPHN. Residues 224–244 form a helical membrane-spanning segment; that stretch reads VPHVVLGTVFLWFGWFGFNGG. Over 245–253 the chain is Extracellular; it reads SSAAANMRG. A helical transmembrane segment spans residues 254–274; that stretch reads VMAVVVTHLAASVGGIVWCVI. Residues 275-281 are Cytoplasmic-facing; the sequence is DFAKNRH. Residues 282–302 traverse the membrane as a helical segment; it reads WSVVGFCEGAVAGLVAITPGS. Position 303 (glycine 303) is a topological domain, extracellular. Residues 304-324 traverse the membrane as a helical segment; sequence FVPPWAAVVIGALGAVFCYAA. Topologically, residues 325–338 are cytoplasmic; sequence TYLKKIIRVDDALD. The chain crosses the membrane as a helical span at residues 339 to 359; sequence IFAEHGVGGMVGNILTALFAA. Residues 360-394 lie on the Extracellular side of the membrane; that stretch reads DYIEALDGSGTAYTGGWITHHYIQLGYQLADTVSC. A helical membrane pass occupies residues 395-415; that stretch reads AAYSFAVSCALLFVMNYIPGL. Residues 416–497 lie on the Cytoplasmic side of the membrane; the sequence is SLRVSREDEV…AESEAQAPAI (82 aa). Residues 440–497 are disordered; that stretch reads YKDSTDEPPPITTSGVQYTSPTVSDSASNEKEQEHRAQNEAQKEEEYRAESEAQAPAI. Polar residues predominate over residues 451–466; the sequence is TTSGVQYTSPTVSDSA. Residues 467 to 490 are compositionally biased toward basic and acidic residues; that stretch reads SNEKEQEHRAQNEAQKEEEYRAES.

This sequence belongs to the ammonia transporter channel (TC 1.A.11.2) family.

The protein localises to the membrane. Functionally, transporter for ammonium to use as a nitrogen source. Under ammonium limitation acts as an ammonium sensor, generating a signal that leads to pseudohyphal growth. The polypeptide is Ammonium transporter 1 (amt1) (Schizosaccharomyces pombe (strain 972 / ATCC 24843) (Fission yeast)).